We begin with the raw amino-acid sequence, 615 residues long: Mitogen-activated protein kinase 18 (615 aa).

The 292-residue stretch at 25 to 316 (YRILEVIGKG…PAEALADPYF (292 aa)) folds into the Protein kinase domain. Residues 31–39 (IGKGSYGVV) and Lys-54 each bind ATP. The Proton acceptor role is filled by Asp-151. The residue at position 187 (Thr-187) is a Phosphothreonine. The TXY motif lies at 187–189 (TDY). Residue Tyr-189 is modified to Phosphotyrosine. The residue at position 192 (Thr-192) is a Phosphothreonine. Disordered regions lie at residues 414–483 (RSTV…ESSV) and 510–544 (NTMT…PPAA). A compositionally biased stretch (low complexity) spans 415 to 426 (STVHSTVVHSTS). Over residues 445–459 (NGASSAGHPSTSAYP) the composition is skewed to polar residues. The span at 464–473 (GPPPRVPPSG) shows a compositional bias: pro residues. 2 stretches are compositionally biased toward polar residues: residues 510–522 (NTMT…NIEA) and 532–544 (PVHQ…PPAA).

The protein belongs to the protein kinase superfamily. CMGC Ser/Thr protein kinase family. MAP kinase subfamily. As to quaternary structure, interacts with PHS1. Binds to MAPKKK20. In terms of processing, dually phosphorylated on Thr-187 and Tyr-189, which activates the enzyme. Phosphorylated by MAPKKK20. As to expression, expressed in roots, seedlings, leaves, flower buds, flowers and siliques.

The protein localises to the nucleus. It localises to the cytoplasm. It catalyses the reaction L-seryl-[protein] + ATP = O-phospho-L-seryl-[protein] + ADP + H(+). It carries out the reaction L-threonyl-[protein] + ATP = O-phospho-L-threonyl-[protein] + ADP + H(+). With respect to regulation, activated by threonine and tyrosine phosphorylation. Inactivated by phosphatase PHS1. In terms of biological role, mitogen-activated protein kinase (MAPK) that is specifically regulated by PHS1 and MAPKKK20 and mediates signaling that regulates cortical microtubule functions, maybe through regulation of microtubule dynamic instability. The polypeptide is Mitogen-activated protein kinase 18 (Arabidopsis thaliana (Mouse-ear cress)).